The chain runs to 185 residues: Ribosome maturation factor RimM (185 aa).

The 77-residue stretch at 92–168 (DDDTFYHADL…GRRVVVAEAF (77 aa)) folds into the PRC barrel domain.

The protein belongs to the RimM family. As to quaternary structure, binds ribosomal protein uS19.

The protein resides in the cytoplasm. An accessory protein needed during the final step in the assembly of 30S ribosomal subunit, possibly for assembly of the head region. Essential for efficient processing of 16S rRNA. May be needed both before and after RbfA during the maturation of 16S rRNA. It has affinity for free ribosomal 30S subunits but not for 70S ribosomes. The polypeptide is Ribosome maturation factor RimM (Xanthobacter autotrophicus (strain ATCC BAA-1158 / Py2)).